Reading from the N-terminus, the 299-residue chain is tRNA dimethylallyltransferase (299 aa).

10-17 (GATATGKS) is an ATP binding site. 12–17 (TATGKS) contributes to the substrate binding site. An interaction with substrate tRNA region spans residues 35–38 (DSRQ).

This sequence belongs to the IPP transferase family. Monomer. Mg(2+) serves as cofactor.

The catalysed reaction is adenosine(37) in tRNA + dimethylallyl diphosphate = N(6)-dimethylallyladenosine(37) in tRNA + diphosphate. Functionally, catalyzes the transfer of a dimethylallyl group onto the adenine at position 37 in tRNAs that read codons beginning with uridine, leading to the formation of N6-(dimethylallyl)adenosine (i(6)A). This is tRNA dimethylallyltransferase from Rippkaea orientalis (strain PCC 8801 / RF-1) (Cyanothece sp. (strain PCC 8801)).